Consider the following 310-residue polypeptide: Acetyl-coenzyme A carboxylase carboxyl transferase subunit beta (310 aa).

The CoA carboxyltransferase N-terminal domain occupies 27–296 (LWRKCPNCEA…QDRDAEPDDT (270 aa)). Residues cysteine 31, cysteine 34, cysteine 50, and cysteine 53 each coordinate Zn(2+). A C4-type zinc finger spans residues 31 to 53 (CPNCEAVLYLPELERHQSVCPKC). Residues 282–310 (THQPHQDRDAEPDDTASQSTLDEFSQADH) are disordered.

It belongs to the AccD/PCCB family. Acetyl-CoA carboxylase is a heterohexamer composed of biotin carboxyl carrier protein (AccB), biotin carboxylase (AccC) and two subunits each of ACCase subunit alpha (AccA) and ACCase subunit beta (AccD). It depends on Zn(2+) as a cofactor.

The protein resides in the cytoplasm. It catalyses the reaction N(6)-carboxybiotinyl-L-lysyl-[protein] + acetyl-CoA = N(6)-biotinyl-L-lysyl-[protein] + malonyl-CoA. The protein operates within lipid metabolism; malonyl-CoA biosynthesis; malonyl-CoA from acetyl-CoA: step 1/1. In terms of biological role, component of the acetyl coenzyme A carboxylase (ACC) complex. Biotin carboxylase (BC) catalyzes the carboxylation of biotin on its carrier protein (BCCP) and then the CO(2) group is transferred by the transcarboxylase to acetyl-CoA to form malonyl-CoA. In Chromohalobacter salexigens (strain ATCC BAA-138 / DSM 3043 / CIP 106854 / NCIMB 13768 / 1H11), this protein is Acetyl-coenzyme A carboxylase carboxyl transferase subunit beta.